The chain runs to 306 residues: Acetaldehyde dehydrogenase (306 aa).

Residue 12–15 (SGNI) coordinates NAD(+). Cys-127 serves as the catalytic Acyl-thioester intermediate. NAD(+) is bound by residues 158 to 166 (SAGPGTRAN) and Asn-277.

It belongs to the acetaldehyde dehydrogenase family.

The catalysed reaction is acetaldehyde + NAD(+) + CoA = acetyl-CoA + NADH + H(+). The protein is Acetaldehyde dehydrogenase of Mycolicibacterium gilvum (strain PYR-GCK) (Mycobacterium gilvum (strain PYR-GCK)).